Here is a 171-residue protein sequence, read N- to C-terminus: Protein-export protein SecB (171 aa).

Belongs to the SecB family. Homotetramer, a dimer of dimers. One homotetramer interacts with 1 SecA dimer.

It localises to the cytoplasm. One of the proteins required for the normal export of preproteins out of the cell cytoplasm. It is a molecular chaperone that binds to a subset of precursor proteins, maintaining them in a translocation-competent state. It also specifically binds to its receptor SecA. The polypeptide is Protein-export protein SecB (Granulibacter bethesdensis (strain ATCC BAA-1260 / CGDNIH1)).